The chain runs to 240 residues: Pyridoxine 5'-phosphate synthase (240 aa).

Asn6 provides a ligand contact to 3-amino-2-oxopropyl phosphate. 8–9 is a binding site for 1-deoxy-D-xylulose 5-phosphate; that stretch reads DH. Arg17 is a binding site for 3-amino-2-oxopropyl phosphate. The active-site Proton acceptor is the His42. Arg44 and His49 together coordinate 1-deoxy-D-xylulose 5-phosphate. Residue Glu69 is the Proton acceptor of the active site. Residue Thr99 participates in 1-deoxy-D-xylulose 5-phosphate binding. The Proton donor role is filled by His190. Residues Gly191 and 212–213 contribute to the 3-amino-2-oxopropyl phosphate site; that span reads GH.

Belongs to the PNP synthase family. Homooctamer; tetramer of dimers.

The protein resides in the cytoplasm. It catalyses the reaction 3-amino-2-oxopropyl phosphate + 1-deoxy-D-xylulose 5-phosphate = pyridoxine 5'-phosphate + phosphate + 2 H2O + H(+). It participates in cofactor biosynthesis; pyridoxine 5'-phosphate biosynthesis; pyridoxine 5'-phosphate from D-erythrose 4-phosphate: step 5/5. Catalyzes the complicated ring closure reaction between the two acyclic compounds 1-deoxy-D-xylulose-5-phosphate (DXP) and 3-amino-2-oxopropyl phosphate (1-amino-acetone-3-phosphate or AAP) to form pyridoxine 5'-phosphate (PNP) and inorganic phosphate. This chain is Pyridoxine 5'-phosphate synthase, found in Pseudomonas putida (strain ATCC 700007 / DSM 6899 / JCM 31910 / BCRC 17059 / LMG 24140 / F1).